A 183-amino-acid polypeptide reads, in one-letter code: Intraflagellar transport protein 27 homolog (183 aa).

GTP is bound by residues 12–19 (GAPTVGKT), 63–67 (DVSGQ), and 120–123 (NKSD).

This sequence belongs to the small GTPase superfamily. Rab family. As to quaternary structure, component of the IFT complex B.

The protein localises to the cell projection. The protein resides in the cilium. It localises to the flagellum. Functionally, small GTPase-like component of the intraflagellar transport (IFT) complex B required for both anterograde and retrograde intraflagellar transport. May be involved in cargo loading of the retrograde transport. This is Intraflagellar transport protein 27 homolog from Trypanosoma brucei brucei (strain 927/4 GUTat10.1).